Reading from the N-terminus, the 285-residue chain is Polyamine aminopropyltransferase (285 aa).

The 237-residue stretch at 5-241 (DNWYIEHFQP…GWWSVTMASK (237 aa)) folds into the PABS domain. An S-methyl-5'-thioadenosine-binding site is contributed by Gln35. Residues His66 and Asp90 each contribute to the spermidine site. Residues Asp110 and 141-142 (DG) contribute to the S-methyl-5'-thioadenosine site. The Proton acceptor role is filled by Asp160. 160–163 (DSTD) provides a ligand contact to spermidine. Pro167 serves as a coordination point for S-methyl-5'-thioadenosine.

Belongs to the spermidine/spermine synthase family. In terms of assembly, homodimer or homotetramer.

The protein localises to the cytoplasm. The enzyme catalyses S-adenosyl 3-(methylsulfanyl)propylamine + putrescine = S-methyl-5'-thioadenosine + spermidine + H(+). The protein operates within amine and polyamine biosynthesis; spermidine biosynthesis; spermidine from putrescine: step 1/1. Catalyzes the irreversible transfer of a propylamine group from the amino donor S-adenosylmethioninamine (decarboxy-AdoMet) to putrescine (1,4-diaminobutane) to yield spermidine. The sequence is that of Polyamine aminopropyltransferase from Xanthomonas oryzae pv. oryzae (strain MAFF 311018).